The chain runs to 864 residues: Bifunctional uridylyltransferase/uridylyl-removing enzyme (864 aa).

The tract at residues 1-328 (MLFPYFPLSE…QTNEPVQVRL (328 aa)) is uridylyltransferase. The interval 329–686 (LDKEFQCVNN…ISNRFSEGGT (358 aa)) is uridylyl-removing. The region spanning 446 to 562 (VDEHIVRTLL…LHFAEAVQNN (117 aa)) is the HD domain. 2 consecutive ACT domains span residues 687 to 766 (EIFV…TFRA) and 793 to 864 (EMEL…LEPK).

Belongs to the GlnD family. It depends on Mg(2+) as a cofactor.

It carries out the reaction [protein-PII]-L-tyrosine + UTP = [protein-PII]-uridylyl-L-tyrosine + diphosphate. The enzyme catalyses [protein-PII]-uridylyl-L-tyrosine + H2O = [protein-PII]-L-tyrosine + UMP + H(+). Uridylyltransferase (UTase) activity is inhibited by glutamine, while glutamine activates uridylyl-removing (UR) activity. In terms of biological role, modifies, by uridylylation and deuridylylation, the PII regulatory proteins (GlnB and homologs), in response to the nitrogen status of the cell that GlnD senses through the glutamine level. Under low glutamine levels, catalyzes the conversion of the PII proteins and UTP to PII-UMP and PPi, while under higher glutamine levels, GlnD hydrolyzes PII-UMP to PII and UMP (deuridylylation). Thus, controls uridylylation state and activity of the PII proteins, and plays an important role in the regulation of nitrogen assimilation and metabolism. This Pasteurella multocida (strain Pm70) protein is Bifunctional uridylyltransferase/uridylyl-removing enzyme.